The sequence spans 138 residues: Small ribosomal subunit protein uS8c (138 aa).

It belongs to the universal ribosomal protein uS8 family. Part of the 30S ribosomal subunit.

It localises to the plastid. The protein localises to the chloroplast. Functionally, one of the primary rRNA binding proteins, it binds directly to 16S rRNA central domain where it helps coordinate assembly of the platform of the 30S subunit. The polypeptide is Small ribosomal subunit protein uS8c (rps8) (Oenothera elata subsp. hookeri (Hooker's evening primrose)).